Here is a 500-residue protein sequence, read N- to C-terminus: Ent-cassadiene C11-alpha-hydroxylase 1 (500 aa).

Residues 4-24 (SQVWLLWGALSVAVLFYLSTL) traverse the membrane as a helical segment. Residue C442 coordinates heme.

It belongs to the cytochrome P450 family. Heme is required as a cofactor.

The protein resides in the membrane. The enzyme catalyses ent-cassa-12,15-diene + reduced [NADPH--hemoprotein reductase] + O2 = ent-11beta-hydroxycassa-12,15-diene + oxidized [NADPH--hemoprotein reductase] + H2O + H(+). In terms of biological role, enzyme of the diterpenoid metabolism involved in the biosynthesis of antibacterial oryzalides such as phytocassane. Can use ent-cassadiene as substrate, but not C11-alpha-hydroxy-ent-cassadiene, ent-pimaradiene, ent-sandaracopimaradiene, ent-kaurene, ent-isokaurene, syn-pimaradiene, syn-stemarene, syn-stemodene. The chain is Ent-cassadiene C11-alpha-hydroxylase 1 from Oryza sativa subsp. japonica (Rice).